The chain runs to 311 residues: Exosome complex component Rrp4 (311 aa).

Positions 63-131 (GDVVIGEITD…EVKKVKLGLK (69 aa)) constitute an S1 motif domain. The KH domain occupies 139–197 (RDGILVYITPTKVPRLIGKRGSMINMVKEKTHCDIVVGQNGVVWIKGEPDMERIAEKVV). A disordered region spans residues 222–311 (GVEPEIQVEE…EVKDENNSER (90 aa)). Residues 241–300 (PESEDFEEASDYSEDVEVSPESEDIEEVSDESEDLEVESEDVEEGTDTPAAEEDDGEAGD) are compositionally biased toward acidic residues. Residues 301–311 (AEVKDENNSER) show a composition bias toward basic and acidic residues.

The protein belongs to the RRP4 family. In terms of assembly, component of the archaeal exosome complex. Forms a trimer of Rrp4 and/or Csl4 subunits. The trimer associates with a hexameric ring-like arrangement composed of 3 Rrp41-Rrp42 heterodimers.

The protein resides in the cytoplasm. In terms of biological role, non-catalytic component of the exosome, which is a complex involved in RNA degradation. Increases the RNA binding and the efficiency of RNA degradation. Confers strong poly(A) specificity to the exosome. This is Exosome complex component Rrp4 from Methanothermobacter thermautotrophicus (strain ATCC 29096 / DSM 1053 / JCM 10044 / NBRC 100330 / Delta H) (Methanobacterium thermoautotrophicum).